Reading from the N-terminus, the 553-residue chain is Formate--tetrahydrofolate ligase (553 aa).

Residue 62 to 69 participates in ATP binding; that stretch reads TPAGEGKS.

This sequence belongs to the formate--tetrahydrofolate ligase family.

It catalyses the reaction (6S)-5,6,7,8-tetrahydrofolate + formate + ATP = (6R)-10-formyltetrahydrofolate + ADP + phosphate. It participates in one-carbon metabolism; tetrahydrofolate interconversion. The sequence is that of Formate--tetrahydrofolate ligase from Pediococcus pentosaceus (strain ATCC 25745 / CCUG 21536 / LMG 10740 / 183-1w).